The primary structure comprises 283 residues: Gap junction alpha-6 protein (283 aa).

At 1–23 (MSDWSALHQLLEKVQPYSTAGGK) the chain is on the cytoplasmic side. A helical membrane pass occupies residues 24–41 (VWIKVLFIFRILLLGTAI). Residues 42–76 (ESAWSDEQFEFHCNTQQPGCENVCYDHAFPISHVR) lie on the Extracellular side of the membrane. A helical membrane pass occupies residues 77–99 (LWVLQVIFVSVPILLYLAHVYYV). Residues 100–150 (VRQNKKLNKQEEELEAAHFNEASVERHLETIAGEQFKCGSEEQSKVKMRGR) are Cytoplasmic-facing. A helical transmembrane segment spans residues 151-173 (LLLTYMASIFFKSVFEMAFLLIQ). Over 174-208 (WYIYGFTLSALYICEQSPCPRRVDCFLSRPTEKTI) the chain is Extracellular. The chain crosses the membrane as a helical span at residues 209–231 (FILFMFVVSVVSFVLDIIELFYV). Over 232–283 (LFKAIKNRMRKAEDEVYCDELPCPSHVSSSTVLTTIDSSEQAVPVELSSVCI) the chain is Cytoplasmic.

This sequence belongs to the connexin family. Alpha-type (group II) subfamily. As to quaternary structure, a connexon is composed of a hexamer of connexins.

The protein localises to the cell membrane. Its subcellular location is the cell junction. It localises to the gap junction. Its function is as follows. One gap junction consists of a cluster of closely packed pairs of transmembrane channels, the connexons, through which materials of low MW diffuse from one cell to a neighboring cell. This chain is Gap junction alpha-6 protein (Gja6), found in Mus musculus (Mouse).